Here is a 354-residue protein sequence, read N- to C-terminus: Bacteriochlorophyll a protein (354 aa).

5 residues coordinate bacteriochlorophyll a: histidine 99, histidine 134, histidine 278, histidine 285, and histidine 286.

Homotrimer. Each subunit contains 7 molecules of bacteriochlorophyll a.

Intermediary in the transfer of excitation energy from the chlorophyll to the reaction centers. This chain is Bacteriochlorophyll a protein (fmoA), found in Chlorobaculum thiosulfatiphilum (Chlorobium limicola f.sp. thiosulfatophilum).